The following is a 360-amino-acid chain: C-X-C chemokine receptor type 2 (360 aa).

Over 1 to 48 (MTIILKDLSNSSILWEGFEDEFGNYSGTPPTEDYDYSPCEISTETLNK) the chain is Extracellular. N-linked (GlcNAc...) asparagine glycans are attached at residues Asn-10 and Asn-24. Residues 49-75 (YAVVVIDALVFLLSLLGNSLVMLVILY) form a helical membrane-spanning segment. Topologically, residues 76-84 (SRIGRSVTD) are cytoplasmic. Residues 85–105 (VYLLNLAMADLLFAMTLPIWT) traverse the membrane as a helical segment. The Extracellular portion of the chain corresponds to 106-120 (ASKAKGWVFGTPLCK). A disulfide bridge links Cys-119 with Cys-196. Residues 121–142 (VVSLLKEVNFYSGILLLACISM) form a helical membrane-spanning segment. The Cytoplasmic portion of the chain corresponds to 143–163 (DRYLAIVHATRTLTQKWHWVK). A helical transmembrane segment spans residues 164-183 (FICLGIWALSVILALPIFIF). The Extracellular portion of the chain corresponds to 184–208 (REAYQPPYSDLVCYEDLGANTTKWR). The chain crosses the membrane as a helical span at residues 209–231 (MIMRVLPQTFGFLLPLLVMLFCY). The Cytoplasmic segment spans residues 232–251 (GFTLRTLFSAQMGHKHRAMR). A helical membrane pass occupies residues 252–273 (VIFAVVLVFLLCWLPYNLVLIA). The Extracellular portion of the chain corresponds to 274-294 (DTLMRAHVIAETCQRRNDIGR). Residues 295 to 315 (ALDATEILGFLHSCLNPLIYV) form a helical membrane-spanning segment. Residues 316-360 (FIGQKFRHGLLKIMAIHGLISKEFLAKDGRPSFVGSSSGNTSTTL) lie on the Cytoplasmic side of the membrane.

The protein belongs to the G-protein coupled receptor 1 family. In terms of assembly, interacts with IL8. Interacts with GNAI2. Post-translationally, phosphorylated upon ligand binding; which is required for desensitization.

It is found in the cell membrane. Functionally, receptor for interleukin-8 which is a powerful neutrophil chemotactic factor. Binding of IL-8 to the receptor causes activation of neutrophils. This response is mediated via a G-protein that activates a phosphatidylinositol-calcium second messenger system. Binds to IL-8 with high affinity. Also binds with high affinity to CXCL3, GRO/MGSA and NAP-2. This is C-X-C chemokine receptor type 2 (CXCR2) from Bos taurus (Bovine).